A 735-amino-acid polypeptide reads, in one-letter code: 1,4-alpha-glucan branching enzyme GlgB (735 aa).

The active-site Nucleophile is the Asp414. Glu469 (proton donor) is an active-site residue.

Belongs to the glycosyl hydrolase 13 family. GlgB subfamily. Monomer.

It catalyses the reaction Transfers a segment of a (1-&gt;4)-alpha-D-glucan chain to a primary hydroxy group in a similar glucan chain.. The protein operates within glycan biosynthesis; glycogen biosynthesis. In terms of biological role, catalyzes the formation of the alpha-1,6-glucosidic linkages in glycogen by scission of a 1,4-alpha-linked oligosaccharide from growing alpha-1,4-glucan chains and the subsequent attachment of the oligosaccharide to the alpha-1,6 position. The chain is 1,4-alpha-glucan branching enzyme GlgB from Burkholderia lata (strain ATCC 17760 / DSM 23089 / LMG 22485 / NCIMB 9086 / R18194 / 383).